Consider the following 211-residue polypeptide: Troponin I, cardiac muscle (211 aa).

The disordered stretch occupies residues 1-23 (MADESGDAAGCPPPAPAPIRRQS). Ala-2 is subject to N-acetylalanine. Residue Ser-5 is modified to Phosphoserine. A phosphoserine; by PKA and PKD/PRKD1 mark is found at Ser-23 and Ser-24. The residue at position 27 (Tyr-27) is a Phosphotyrosine. Phosphothreonine; by STK4/MST1 is present on Thr-32. An involved in binding TNC region spans residues 33-80 (EPHAKKKSKISASRKLQLKTLMLQIAKQELEREAEERRGEKGRALSTR). Phosphoserine; by PKC/PRKCE is present on residues Ser-43 and Ser-45. Position 52 is a phosphothreonine; by STK4/MST1 (Thr-52). Ser-78 bears the Phosphoserine mark. A Phosphothreonine modification is found at Thr-79. Phosphothreonine; by STK4/MST1 is present on residues Thr-130 and Thr-144. Residues 130–150 (TQKIFDLRGKFKRPTLRRVRI) form an involved in binding TNC and actin region. Ser-151 bears the Phosphoserine; by PAK3 mark. Ser-167 carries the post-translational modification Phosphoserine. Thr-182 bears the Phosphothreonine mark. The residue at position 200 (Ser-200) is a Phosphoserine.

It belongs to the troponin I family. In terms of assembly, binds to actin and tropomyosin. Interacts with TRIM63. Interacts with STK4/MST1. Phosphorylated at Ser-23 and Ser-24 by PRKD1; phosphorylation reduces myofilament calcium sensitivity. Phosphorylated preferentially at Thr-32. Phosphorylation by STK4/MST1 alters its binding affinity to TNNC1 (cardiac Tn-C) and TNNT2 (cardiac Tn-T). Phosphorylated at Ser-43 and Ser-45 by PRKCE; phosphorylation increases myocardium contractile dysfunction.

Its function is as follows. Troponin I is the inhibitory subunit of troponin, the thin filament regulatory complex which confers calcium-sensitivity to striated muscle actomyosin ATPase activity. This chain is Troponin I, cardiac muscle (TNNI3), found in Canis lupus familiaris (Dog).